A 79-amino-acid polypeptide reads, in one-letter code: Putative membrane protein insertion efficiency factor (79 aa).

This sequence belongs to the UPF0161 family.

The protein localises to the cell inner membrane. Could be involved in insertion of integral membrane proteins into the membrane. The polypeptide is Putative membrane protein insertion efficiency factor (Prochlorococcus marinus (strain NATL1A)).